The primary structure comprises 194 residues: dCTP deaminase, dUMP-forming (194 aa).

Residues 104–109 (RSSLGR), D122, 130–132 (TLE), Q151, Y165, K172, and Q176 each bind dCTP. The active-site Proton donor/acceptor is E132.

It belongs to the dCTP deaminase family. Homotrimer.

The catalysed reaction is dCTP + 2 H2O = dUMP + NH4(+) + diphosphate. It functions in the pathway pyrimidine metabolism; dUMP biosynthesis; dUMP from dCTP: step 1/1. Its function is as follows. Bifunctional enzyme that catalyzes both the deamination of dCTP to dUTP and the hydrolysis of dUTP to dUMP without releasing the toxic dUTP intermediate. This chain is dCTP deaminase, dUMP-forming, found in Dictyoglomus turgidum (strain DSM 6724 / Z-1310).